The sequence spans 219 residues: uncharacterized protein (219 aa).

The signal sequence occupies residues 1 to 15 (MYVLFLLSWVLVAGA). N118 is a glycosylation site (N-linked (GlcNAc...) asparagine). Positions 138–174 (GEVGEDPGKRARKRRLGLPIGEPGEDVGKRMRQRQQG) are disordered.

Component of the acid-insoluble and acid-soluble organic matrix of calcified layers of the shell (at protein level).

The protein localises to the secreted. This is an uncharacterized protein from Lottia gigantea (Giant owl limpet).